The sequence spans 271 residues: Aquaporin-1 (271 aa).

Topologically, residues 1 to 11 are cytoplasmic; the sequence is MASEFKKKLFW. The helical transmembrane segment at 12 to 29 threads the bilayer; sequence RAVVAEFLAMILFVFISI. The Extracellular segment spans residues 30–48; it reads GSALGFNYPVRNNQTAGAA. Asn42 carries an N-linked (GlcNAc...) asparagine glycan. A helical membrane pass occupies residues 49-67; the sequence is QDNVKVSLAFGLSIATLAQ. At 68 to 70 the chain is on the cytoplasmic side; it reads SVG. The stretch at 71–84 is an intramembrane region; sequence HISGAHLNPAVTLG. Residues 78–80 carry the NPA 1 motif; it reads NPA. The Cytoplasmic portion of the chain corresponds to 85-92; it reads LLLSCQIS. A helical transmembrane segment spans residues 93–111; the sequence is ILRAVMYIIAQCVGAIVAT. Residues 112–135 are Extracellular-facing; sequence AILSGITSSLPDNSLGRNELAPGV. The helical transmembrane segment at 136–155 threads the bilayer; that stretch reads NSGQGLGIEIIGTLQLVLCV. Residues 156 to 165 lie on the Cytoplasmic side of the membrane; that stretch reads LATTDRRRRD. Residues 166-183 form a helical membrane-spanning segment; that stretch reads LGGSGPLAIGLSVALGHL. Topologically, residues 184–188 are extracellular; sequence LAIDY. An intramembrane segment occupies 189–201; the sequence is TGCGINPARSFGS. An NPA 2 motif is present at residues 194 to 196; sequence NPA. Residues 202-208 are Extracellular-facing; it reads SVITHNF. The helical transmembrane segment at 209–226 threads the bilayer; that stretch reads KDHWIFWVGPFIGGALAV. The Cytoplasmic portion of the chain corresponds to 227 to 271; it reads LIYDFILAPRSSDLTDRVKVWTSGQVEEYELDGDDINSRVEMKPK. Ser249 bears the Phosphoserine mark. Tyr255 carries the phosphotyrosine modification. The residue at position 264 (Ser264) is a Phosphoserine.

Belongs to the MIP/aquaporin (TC 1.A.8) family. In terms of assembly, homotetramer; each monomer provides an independent water pore. Component of the ankyrin-1 complex in the erythrocyte, composed of ANK1, RHCE, RHAG, SLC4A1, EPB42, GYPA, GYPB and AQP1. Interacts with EPHB2; involved in endolymph production in the inner ear. Identified in a complex with STOM. Interacts (via the N-terminal) with ANK1 (via ANK 1-5 repeats). Interacts (via the C-terminal) with EPB42.

It localises to the cell membrane. It catalyses the reaction H2O(in) = H2O(out). The enzyme catalyses nitric oxide(out) = nitric oxide(in). It carries out the reaction CO2(out) = CO2(in). The catalysed reaction is glycerol(in) = glycerol(out). It catalyses the reaction H2O2(out) = H2O2(in). The enzyme catalyses K(+)(in) = K(+)(out). It carries out the reaction Na(+)(in) = Na(+)(out). Forms a water channel that facilitates the transport of water across cell membranes, playing a crucial role in water homeostasis in various tissues. Could also be permeable to small solutes including hydrogen peroxide, glycerol and gases such as amonnia (NH3), nitric oxide (NO) and carbon dioxide (CO2). Recruited to the ankyrin-1 complex, a multiprotein complex of the erythrocyte membrane, it could be part of a CO2 metabolon, linking facilitated diffusion of CO2 across the membrane, anion exchange of Cl(-)/HCO3(-) and interconversion of dissolved CO2 and carbonic acid in the cytosol. In vitro, it shows non-selective gated cation channel activity and may be permeable to cations like K(+) and Na(+) in vivo. The protein is Aquaporin-1 of Canis lupus familiaris (Dog).